A 197-amino-acid chain; its full sequence is Holliday junction branch migration complex subunit RuvA (197 aa).

The domain I stretch occupies residues 1 to 64; it reads MIALLRGLVV…EDVLALYGFL (64 aa). The domain II stretch occupies residues 65–143; it reads TQDEKALFEK…AATGEEPGAP (79 aa). A flexible linker region spans residues 144–153; the sequence is AAEALSPIDQ. Positions 153–197 are domain III; the sequence is QDVLSALLNLGCARPQAEAAVRKAKAAGASLDFEPLFRRALELVR.

This sequence belongs to the RuvA family. Homotetramer. Forms an RuvA(8)-RuvB(12)-Holliday junction (HJ) complex. HJ DNA is sandwiched between 2 RuvA tetramers; dsDNA enters through RuvA and exits via RuvB. An RuvB hexamer assembles on each DNA strand where it exits the tetramer. Each RuvB hexamer is contacted by two RuvA subunits (via domain III) on 2 adjacent RuvB subunits; this complex drives branch migration. In the full resolvosome a probable DNA-RuvA(4)-RuvB(12)-RuvC(2) complex forms which resolves the HJ.

Its subcellular location is the cytoplasm. The RuvA-RuvB-RuvC complex processes Holliday junction (HJ) DNA during genetic recombination and DNA repair, while the RuvA-RuvB complex plays an important role in the rescue of blocked DNA replication forks via replication fork reversal (RFR). RuvA specifically binds to HJ cruciform DNA, conferring on it an open structure. The RuvB hexamer acts as an ATP-dependent pump, pulling dsDNA into and through the RuvAB complex. HJ branch migration allows RuvC to scan DNA until it finds its consensus sequence, where it cleaves and resolves the cruciform DNA. The protein is Holliday junction branch migration complex subunit RuvA of Solibacter usitatus (strain Ellin6076).